The chain runs to 68 residues: DNA-directed RNA polymerase subunit omega (68 aa).

Belongs to the RNA polymerase subunit omega family. The RNAP catalytic core consists of 2 alpha, 1 beta, 1 beta' and 1 omega subunit. When a sigma factor is associated with the core the holoenzyme is formed, which can initiate transcription.

The catalysed reaction is RNA(n) + a ribonucleoside 5'-triphosphate = RNA(n+1) + diphosphate. In terms of biological role, promotes RNA polymerase assembly. Latches the N- and C-terminal regions of the beta' subunit thereby facilitating its interaction with the beta and alpha subunits. The protein is DNA-directed RNA polymerase subunit omega of Neisseria gonorrhoeae (strain NCCP11945).